The primary structure comprises 334 residues: Mucin-15 (334 aa).

An N-terminal signal peptide occupies residues 1–23 (MLALAKILLISTLFYSLLSGSHG). Residues 24 to 236 (KENQDINTTQ…SDPQKENRNT (213 aa)) lie on the Extracellular side of the membrane. N-linked (GlcNAc...) asparagine glycosylation is found at asparagine 30, asparagine 61, asparagine 79, asparagine 90, asparagine 148, asparagine 155, asparagine 163, asparagine 218, and asparagine 225. Positions 64-104 (TSNLKASHSPPLNLPNNSHGITDFSSNSSAEHSLGSLKPTS) are disordered. Positions 77–94 (LPNNSHGITDFSSNSSAE) are enriched in polar residues. Residues 237 to 257 (GIVFGAILGAILGVSLLTLVG) traverse the membrane as a helical segment. Topologically, residues 258-334 (YLLCGKRKTD…DDIPPLRTSV (77 aa)) are cytoplasmic. Residues 304–334 (PTLNDSAMPESEENARDGIPMDDIPPLRTSV) are disordered.

Post-translationally, highly glycosylated (N- and O-linked carbohydrates). As to expression, expressed in spleen, thymus, prostate, testis, ovary, small intestine, colon, peripheral blood leukocyte, bone marrow, lymph node and lung.

Its subcellular location is the cell membrane. It is found in the secreted. In terms of biological role, may play a role in the cell adhesion to the extracellular matrix. This Homo sapiens (Human) protein is Mucin-15 (MUC15).